The sequence spans 530 residues: ATP synthase subunit alpha (530 aa).

169 to 176 contacts ATP; sequence GDRQTGKT.

The protein belongs to the ATPase alpha/beta chains family. F-type ATPases have 2 components, CF(1) - the catalytic core - and CF(0) - the membrane proton channel. CF(1) has five subunits: alpha(3), beta(3), gamma(1), delta(1), epsilon(1). CF(0) has three main subunits: a(1), b(2) and c(9-12). The alpha and beta chains form an alternating ring which encloses part of the gamma chain. CF(1) is attached to CF(0) by a central stalk formed by the gamma and epsilon chains, while a peripheral stalk is formed by the delta and b chains.

The protein resides in the cell membrane. It carries out the reaction ATP + H2O + 4 H(+)(in) = ADP + phosphate + 5 H(+)(out). Produces ATP from ADP in the presence of a proton gradient across the membrane. The alpha chain is a regulatory subunit. This Mycoplasmopsis synoviae (strain 53) (Mycoplasma synoviae) protein is ATP synthase subunit alpha.